Reading from the N-terminus, the 133-residue chain is Holo-[acyl-carrier-protein] synthase (133 aa).

The Mg(2+) site is built by Asp-8 and Glu-56.

This sequence belongs to the P-Pant transferase superfamily. AcpS family. Requires Mg(2+) as cofactor.

It is found in the cytoplasm. The enzyme catalyses apo-[ACP] + CoA = holo-[ACP] + adenosine 3',5'-bisphosphate + H(+). Its function is as follows. Transfers the 4'-phosphopantetheine moiety from coenzyme A to a Ser of acyl-carrier-protein. This Clostridium perfringens (strain ATCC 13124 / DSM 756 / JCM 1290 / NCIMB 6125 / NCTC 8237 / Type A) protein is Holo-[acyl-carrier-protein] synthase.